The sequence spans 839 residues: Autophagy-related protein 9A (839 aa).

Position 2 is an N-acetylalanine (Ala2). The Cytoplasmic portion of the chain corresponds to 2 to 61 (AQFDTEYQRLEASYSDSPPGEEDLLVHVAEGSKSPWHHIENLDLFFSRVYNLHQKNGFTC). Positions 8–11 (YQRL) match the Tyrosine-based sorting signal motif. Phosphoserine occurs at positions 14, 16, and 18. A helical transmembrane segment spans residues 62–84 (MLIGEMFELMQFLFVVAFTTFLV). The Lumenal segment spans residues 85-128 (SCVDYDILFANKMVNHSLHPTEPVKVTLPDAFLPAQVCSARIQE). Residue Asn99 is glycosylated (N-linked (GlcNAc...) asparagine). Residues 129–154 (NGSLITILVIAGVFWIHRLIKFIYNI) traverse the membrane as a helical segment. Residues 155-290 (CCYWEIHSFY…ELAQRLSNRI (136 aa)) lie on the Cytoplasmic side of the membrane. Residues 291–301 (LWIGIANFLLC) lie within the membrane without spanning it. Topologically, residues 302-319 (PLILIWQILYAFFSYAEV) are cytoplasmic. Residues 320 to 328 (LKREPGALG) lie within the membrane without spanning it. Residues 329-371 (ARCWSLYGRCYLRHFNELEHELQSRLNRGYKPASKYMNCFLSP) lie on the Cytoplasmic side of the membrane. Residues 372–397 (LLTLLAKNGAFFAGSILAVLIALTIY) traverse the membrane as a helical segment. Residues 398–406 (DEDVLAVEH) lie on the Lumenal side of the membrane. A helical membrane pass occupies residues 407-424 (VLTTVTLLGVTVTVCRSF). At 425 to 470 (IPDQHMVFCPEQLLRVILAHIHYMPDHWQGNAHRSQTRDEFAQLFQ) the chain is on the cytoplasmic side. An intramembrane segment occupies 471–480 (YKAVFILEEL). Over 481-483 (LSP) the chain is Cytoplasmic. Residues 484–492 (IVTPLILIF) lie within the membrane without spanning it. The Cytoplasmic segment spans residues 493–839 (CLRPRALEII…DELPPQVHKV (347 aa)). Ser656 is modified (phosphoserine). Disordered stretches follow at residues 657–686 (PLQP…SSGS) and 717–839 (HKQQ…VHKV). The segment covering 724-736 (EPERHVWHRRESD) has biased composition (basic and acidic residues). Phosphoserine occurs at positions 735, 738, 741, and 828. 2 stretches are compositionally biased toward acidic residues: residues 737-747 (ESGESAPEEGG) and 823-832 (VPEEGSEDEL).

This sequence belongs to the ATG9 family. In terms of assembly, homotrimer; forms a homotrimer with a central pore that forms a path between the two membrane leaflets. Interacts (via cytoplasmic its C-terminus) with ATG2A. Interacts with SUPT20H. Interacts (via the tyrosine-based sorting signal motif) with AP4M1; promoting association with the AP-4 complex. Interacts with ARFIP1 and ARFIP2. Interacts with ATG4A; the interaction is direct and promotes ATG9A trafficking. Ufmylated in a DDRGK1 dependent manner.

It localises to the preautophagosomal structure membrane. Its subcellular location is the cytoplasmic vesicle. The protein localises to the autophagosome membrane. It is found in the golgi apparatus. The protein resides in the trans-Golgi network membrane. It localises to the late endosome membrane. Its subcellular location is the recycling endosome membrane. The protein localises to the endoplasmic reticulum membrane. It is found in the mitochondrion membrane. The catalysed reaction is a 1,2-diacyl-sn-glycero-3-phosphocholine(in) = a 1,2-diacyl-sn-glycero-3-phosphocholine(out). The enzyme catalyses a 1,2-diacyl-sn-glycero-3-phospho-L-serine(in) = a 1,2-diacyl-sn-glycero-3-phospho-L-serine(out). It catalyses the reaction a 1,2-diacyl-sn-glycero-3-phosphoethanolamine(in) = a 1,2-diacyl-sn-glycero-3-phosphoethanolamine(out). Phospholipid scramblase involved in autophagy by mediating autophagosomal membrane expansion. Cycles between the preautophagosomal structure/phagophore assembly site (PAS) and the cytoplasmic vesicle pool and supplies membrane for the growing autophagosome. Lipid scramblase activity plays a key role in preautophagosomal structure/phagophore assembly by distributing the phospholipids that arrive through ATG2 (ATG2A or ATG2B) from the cytoplasmic to the luminal leaflet of the bilayer, thereby driving autophagosomal membrane expansion. Also required to supply phosphatidylinositol 4-phosphate to the autophagosome initiation site by recruiting the phosphatidylinositol 4-kinase beta (PI4KB) in a process dependent on ARFIP2, but not ARFIP1. In addition to autophagy, also plays a role in necrotic cell death. The protein is Autophagy-related protein 9A of Mus musculus (Mouse).